The primary structure comprises 95 residues: Antitoxin TacA1 (95 aa).

The neutralization domain stretch occupies residues 59-95 (FNFNDEQYEEFINLLDAPVADDPVIEKLLARKPQWDV).

It belongs to the TacA antitoxin family. As to quaternary structure, homodimer. Forms a complex with cognate toxin TacT1. Forms a 4:2 antitoxin:toxin complex with cognate toxin TacT1.

Functionally, antitoxin component of a type II toxin-antitoxin (TA) system. Counteracts the toxic effect of cognate toxin TacT1 (T8), but not TacT2 or TacT3. Plays a role in persister cell formation. In terms of biological role, the TacA1-TacT1 complex binds (and probably represses) its own promoter DNA but not that of tacA3-tacT3, it does not repress the tacA3-tacT3 promoter. This chain is Antitoxin TacA1, found in Salmonella typhimurium (strain 14028s / SGSC 2262).